A 546-amino-acid polypeptide reads, in one-letter code: Immunoglobulin-like domain-containing receptor 1 (546 aa).

Residues 1-23 form the signal peptide; it reads MAWPKLPAPWLLLCTWLPAGCLS. Residues 24–162 form the Ig-like V-type domain; sequence LLVTVQHTER…TSGDPDKEVK (139 aa). Over 24–167 the chain is Extracellular; it reads LLVTVQHTER…DKEVKLIVLH (144 aa). The cysteines at positions 45 and 145 are disulfide-linked. A helical membrane pass occupies residues 168 to 188; the sequence is WLTVIFIILGALLLLLLIGVC. Residues 189–546 are Cytoplasmic-facing; sequence WCQCCPQYCC…SSHSGRSVVI (358 aa). The tract at residues 399–546 is disordered; that stretch reads WSGRHRSSRL…SSHSGRSVVI (148 aa). The segment covering 442–457 has biased composition (basic and acidic residues); the sequence is RCQERPRRPSPRESTQ. The span at 458 to 467 shows a compositional bias: basic residues; the sequence is RHGRRRRHRS. Residues Ser-499 and Ser-501 each carry the phosphoserine modification. Over residues 527-539 the composition is skewed to basic and acidic residues; sequence GSVERRSEKDSSH.

It belongs to the immunoglobulin superfamily. LISCH7 family. In terms of assembly, homooligomer. Interacts with MARVELD2 and OCLN; the interaction is required to recruit MARVELD2 to tricellular contacts. Interacts (via C-terminus) with TRA2A, TRA2B and SRSF1. Interacts with PLSCR1. In terms of tissue distribution, mainly expressed in prostate and to a lower extent in testis, pancreas, kidney, heart and liver.

The protein localises to the cell membrane. It is found in the cell junction. It localises to the tight junction. The protein resides in the cytoplasm. Its subcellular location is the cytosol. Functionally, maintains epithelial barrier function by recruiting MARVELD2/tricellulin to tricellular tight junctions (tTJs). Crucial for normal hearing by maintaining the structural and functional integrity of tTJs, which are critical for the survival of auditory neurosensory HCs. Mediates fatty acids and lipoproteins-stimulated CCK/cholecystokinin secretion in the small intestine. In the inner ear, may regulate alternative pre-mRNA splicing via binding to TRA2A, TRA2B and SRSF1. Its function is as follows. (Microbial infection) Promotes influenza virus infection by inhibiting viral nucleoprotein NP binding to PLSCR1 and thereby PLSCR1-mediated antiviral activity. This is Immunoglobulin-like domain-containing receptor 1 from Homo sapiens (Human).